A 152-amino-acid polypeptide reads, in one-letter code: Pertussis toxin subunit 4 (152 aa).

A signal peptide spans Met1–Ala42. Cystine bridges form between Cys73/Cys93 and Cys145/Cys151.

In terms of assembly, pertussis toxin contains five different chains, S1-S5. They are organized into 2 functional subunits: A, composed of S1 (which is toxic) and B, containing S2, S3, S5, and two copies of S4 (B binds to the membrane receptors). Dimers of S2-S4 and S3-S4 are held together by S5.

The protein resides in the secreted. It localises to the host cell membrane. Its function is as follows. PTX oligomer B binds to receptors on the eukaryotic cell surface and facilitates the translocation of the toxic subunit across the cell membrane. This Bordetella parapertussis (strain 12822 / ATCC BAA-587 / NCTC 13253) protein is Pertussis toxin subunit 4 (ptxD).